The chain runs to 329 residues: MQFIDQACISVKAGRGGDGIVAFRREKYVPAGGPSGGDGGKGGEIVLQADSNLQTLLDFKFKKFIVAQDGRRGGPNKCSGASGKDLVLKVPCGTQVRHQTTGIILGDLKHHGEILVVAYGGKGGLGNAHYLSNSNRAPEKCTEGKEGEQWLLHLELKLLAEVGIIGLPNAGKSTLMSVVSSARPKIADYPFTTLIPNLGVVRKPTGDGTVFADIPGLIEGAAAGVGLGHEFLRHIERTRLLIHLVDAAAARPIEDIAIIEKELFAYGHSLMNRPRVLVFNKKELLNEQCLQKLQAEARAFTNRDIIFISAATSEGLDELLKNVWEKLEI.

The Obg domain maps to 1–159 (MQFIDQACIS…WLLHLELKLL (159 aa)). The OBG-type G domain maps to 160–328 (AEVGIIGLPN…LLKNVWEKLE (169 aa)). ATP contacts are provided by residues 166–173 (GLPNAGKS), 191–195 (FTTLI), 213–216 (DIPG), 280–283 (NKKE), and 309–311 (SAA). Mg(2+)-binding residues include serine 173 and threonine 193.

The protein belongs to the TRAFAC class OBG-HflX-like GTPase superfamily. OBG GTPase family. As to quaternary structure, monomer. The cofactor is Mg(2+).

The protein localises to the cytoplasm. In terms of biological role, an essential GTPase which binds GTP, GDP and possibly (p)ppGpp with moderate affinity, with high nucleotide exchange rates and a fairly low GTP hydrolysis rate. Plays a role in control of the cell cycle, stress response, ribosome biogenesis and in those bacteria that undergo differentiation, in morphogenesis control. This chain is GTPase Obg, found in Prochlorococcus marinus (strain MIT 9211).